The chain runs to 169 residues: MTTELQIGRVIKSHGIRGEVVVEVTTDDPDIRYAPGEVLHGRQTGREHTLTIDTARAHQGRLLIKFEEIPDRTAADSLRGTRFFAPPLEREDDEEGFYDHELEGLRIIHDGADIGVVTGVMHGPAGEILEVELTSGKEVLIPFVHAIVPEVDLEAGTATITPPDGLLDL.

Residues 94-166 (EEGFYDHELE…TATITPPDGL (73 aa)) form the PRC barrel domain.

This sequence belongs to the RimM family. Binds ribosomal protein uS19.

It is found in the cytoplasm. In terms of biological role, an accessory protein needed during the final step in the assembly of 30S ribosomal subunit, possibly for assembly of the head region. Essential for efficient processing of 16S rRNA. May be needed both before and after RbfA during the maturation of 16S rRNA. It has affinity for free ribosomal 30S subunits but not for 70S ribosomes. The chain is Ribosome maturation factor RimM from Corynebacterium efficiens (strain DSM 44549 / YS-314 / AJ 12310 / JCM 11189 / NBRC 100395).